The chain runs to 367 residues: Heme A synthase (367 aa).

Transmembrane regions (helical) follow at residues 25-45, 111-131, 139-159, 174-194, 210-230, 272-292, 305-325, and 327-347; these read ALRL…LVGG, LIAR…WLTG, WPLV…WWMV, LATH…IMRG, GLAA…ALVA, FIHR…MVIA, AVLL…TLLM, and VPLH…GFAV. A heme-binding site is contributed by His274. His335 lines the heme pocket.

It belongs to the COX15/CtaA family. Type 2 subfamily. In terms of assembly, interacts with CtaB. The cofactor is heme b.

The protein resides in the cell membrane. It carries out the reaction Fe(II)-heme o + 2 A + H2O = Fe(II)-heme a + 2 AH2. Its pathway is porphyrin-containing compound metabolism; heme A biosynthesis; heme A from heme O: step 1/1. Its function is as follows. Catalyzes the conversion of heme O to heme A by two successive hydroxylations of the methyl group at C8. The first hydroxylation forms heme I, the second hydroxylation results in an unstable dihydroxymethyl group, which spontaneously dehydrates, resulting in the formyl group of heme A. The protein is Heme A synthase of Rhizobium etli (strain ATCC 51251 / DSM 11541 / JCM 21823 / NBRC 15573 / CFN 42).